Consider the following 957-residue polypeptide: Receptor-like protein 34 (957 aa).

The first 31 residues, 1 to 31 (MKGSWVVSTSIIRITLSFTFLFICHFSDVLA), serve as a signal peptide directing secretion. Residues 32–910 (APTRHLCRPE…EEEDEDLISW (879 aa)) are Extracellular-facing. 7 N-linked (GlcNAc...) asparagine glycosylation sites follow: N78, N101, N114, N143, N167, N191, and N215. 18 LRR repeats span residues 120-143 (LHFLTTLDRSHNDFEGQITSSIEN), 144-167 (LSHLTSLDLSYNRFSGQILNSIGN), 168-192 (LSRLTSLDLSFNQFSGQIPSSIGNL), 194-216 (HLTFLGLSGNRFFGQIPSSIGNL), 217-240 (SHLTFLGLSGNRFFGQFPSSIGGL), 241-264 (SNLTNLHLSYNKYSGQIPSSIGNL), 266-287 (QLIVLYLSVNNFYGEIPSSFGN), 288-312 (LNQLTRLDVSFNKLGGNFPNVLLNL), 313-336 (TGLSVVSLSNNKFTGTLPPNITSL), 338-360 (NLMAFYASDNAFTGTFPSFLFII), 361-384 (PSLTYLGLSGNQLKGTLEFGNISS), 386-409 (SNLQYLNIGSNNFIGPIPSSISKL), 412-434 (LQELGISHLNTQCRPVDFSIFSH), 435-459 (LKSLDDLRLSYLTTTTIDLNDILPY), 460-483 (FKTLRSLDLSGNLVSATNKSSVSS), 487-510 (SQSIQSLYLSGCGITDFPEILRTQ), 511-534 (HELGFLDVSNNKIKGQVPGWLWTL), and 535-557 (PNLFYLNLSNNTFIGFQRPTKPE). N-linked (GlcNAc...) asparagine glycosylation is found at N242 and N263. N-linked (GlcNAc...) asparagine glycans are attached at residues N311 and N332. N-linked (GlcNAc...) asparagine glycosylation is present at N381. N-linked (GlcNAc...) asparagine glycosylation occurs at N477. N-linked (GlcNAc...) asparagine glycosylation is found at N541, N544, N569, N593, N608, and N618. Residues 558–580 (PSMAYLLGSNNNFTGKIPSFICE) form an LRR 19; degenerate repeat. 10 LRR repeats span residues 581-605 (LRSLYTLDLSDNNFSGSIPRCMENL), 606-630 (KSNLSELNLRQNNLSGGFPEHIFES), 632-652 (RSLDVGHNQLVGKLPRSLRFF), 653-675 (SNLEVLNVESNRINDMFPFWLSS), 677-698 (QKLQVLVLRSNAFHGPINQALF), 699-722 (PKLRIIDISHNHFNGSLPTEYFVE), 765-789 (LTIYTAVDFSGNKFEGEIPKSIGLL), 790-813 (KELHVLNLSNNAFTGHIPSSIGNL), 815-837 (ALESLDVSQNKLYGEIPQEIGNL), and 839-862 (LLSYMNFSHNQLTGLVPGGQQFLT). N-linked (GlcNAc...) asparagine glycosylation is present at N712. 4 N-linked (GlcNAc...) asparagine glycosylation sites follow: N796, N812, N836, and N844. Residues 911–931 (IAAAIGFGPGIAFGLMFGYIL) form a helical membrane-spanning segment. Over 932 to 957 (VSYKPEWFMNPFGRNNRRRKRHTTTH) the chain is Cytoplasmic.

The protein belongs to the RLP family.

The protein localises to the cell membrane. The protein is Receptor-like protein 34 of Arabidopsis thaliana (Mouse-ear cress).